Here is a 557-residue protein sequence, read N- to C-terminus: Membrane protein insertase YidC (557 aa).

The next 5 helical transmembrane spans lie at 3-23 (IKRTVLWVIFFMSAVMLFDNW), 363-383 (FVGNWGWAIVLLTLLIKAVFF), 437-457 (LPVVIQIPVFISLYWVLLASV), 476-496 (PYFILPVLMAVSMFVQTKLNP), and 507-527 (MMFMPIAFSVMFFFFPAGLVL).

The protein belongs to the OXA1/ALB3/YidC family. Type 1 subfamily. Interacts with the Sec translocase complex via SecD. Specifically interacts with transmembrane segments of nascent integral membrane proteins during membrane integration.

Its subcellular location is the cell inner membrane. Functionally, required for the insertion and/or proper folding and/or complex formation of integral membrane proteins into the membrane. Involved in integration of membrane proteins that insert both dependently and independently of the Sec translocase complex, as well as at least some lipoproteins. Aids folding of multispanning membrane proteins. This Burkholderia thailandensis (strain ATCC 700388 / DSM 13276 / CCUG 48851 / CIP 106301 / E264) protein is Membrane protein insertase YidC.